The primary structure comprises 304 residues: Nucleotide-binding protein ROP_69550 (304 aa).

24–31 (GLSGAGLQ) serves as a coordination point for ATP. 75-78 (DVRS) is a binding site for GTP.

It belongs to the RapZ-like family.

Displays ATPase and GTPase activities. The chain is Nucleotide-binding protein ROP_69550 from Rhodococcus opacus (strain B4).